We begin with the raw amino-acid sequence, 465 residues long: Auxin transporter-like protein 3 (465 aa).

Over M1–Q52 the chain is Cytoplasmic. Residues V53–L70 traverse the membrane as a helical segment. The Extracellular portion of the chain corresponds to S71–G72. The chain crosses the membrane as a helical span at residues I73–L93. Residues Y94–N129 lie on the Cytoplasmic side of the membrane. Residues L130 to C150 form a helical membrane-spanning segment. The Extracellular segment spans residues A151 to T165. The helical transmembrane segment at W166–Y186 threads the bilayer. Over R187–W189 the chain is Cytoplasmic. The chain crosses the membrane as a helical span at residues S190 to L210. Residues H211–L225 are Extracellular-facing. The chain crosses the membrane as a helical span at residues V226–V246. Residues E247–K259 are Cytoplasmic-facing. The helical transmembrane segment at M260–V280 threads the bilayer. Residues Y281–A307 are Extracellular-facing. Residues V308–F328 form a helical membrane-spanning segment. Residues V329–R349 are Cytoplasmic-facing. The chain crosses the membrane as a helical span at residues L350–N370. Residues S371–G374 are Extracellular-facing. A helical transmembrane segment spans residues S375–A395. At S396–N421 the chain is on the cytoplasmic side. A helical transmembrane segment spans residues V422 to L442. At N443–A465 the chain is on the extracellular side.

This sequence belongs to the amino acid/polyamine transporter 2 family. Amino acid/auxin permease (AAAP) (TC 2.A.18.1) subfamily. Shoots and roots of nodulating plants. Low levels in roots, nodules, stems, petioles, leaves, shoot apices and flowers.

Its subcellular location is the cell membrane. Its function is as follows. Carrier protein involved in proton-driven auxin influx. Mediates the formation of auxin gradient from developing leaves (site of auxin biosynthesis) to tips by contributing to the loading of auxin in vascular tissues and facilitating acropetal (base to tip) auxin transport within inner tissues of the root apex, and basipetal (tip to base) auxin transport within outer tissues of the root apex. May be involved in lateral roots and nodules formation. The sequence is that of Auxin transporter-like protein 3 (LAX3) from Medicago truncatula (Barrel medic).